A 467-amino-acid chain; its full sequence is Ribosomal RNA small subunit methyltransferase F (467 aa).

S-adenosyl-L-methionine-binding positions include 119 to 125 (ASAPGSK), Glu143, Asp170, and Asp188. Residue Cys241 is the Nucleophile of the active site.

Belongs to the class I-like SAM-binding methyltransferase superfamily. RsmB/NOP family.

It localises to the cytoplasm. The catalysed reaction is cytidine(1407) in 16S rRNA + S-adenosyl-L-methionine = 5-methylcytidine(1407) in 16S rRNA + S-adenosyl-L-homocysteine + H(+). Its function is as follows. Specifically methylates the cytosine at position 1407 (m5C1407) of 16S rRNA. The sequence is that of Ribosomal RNA small subunit methyltransferase F from Shewanella amazonensis (strain ATCC BAA-1098 / SB2B).